A 335-amino-acid polypeptide reads, in one-letter code: MTRASVLTGLGSCLPSRCVTNAELERTMDTSDEWIRARTGIAQRYVAEEGTLTSDLAVGAAERALKSARLTPDEIDAVIVATTTPDRPCPATAPTVAARLGTGPVPAFDVSAVCSGFLYGLATGSGLIASGAAERVLVIGAETFSRILNPQDRSTSVIFGDGAGAVVLRAGEPGETGALGPLRLGSDGTGVDLITVPAGGPPRPGAAAPDDLADRYFTMEGKRVFWLAVQRMGECAESVLDRAGWRVADVDWLVSHQANHRITARLADEIGIPRERSVSNIAEVGNTAAASIPLALDHAHARGTLRPGDRVLLTAFGGGLTWGAAALTWPAVDPV.

Active-site residues include C114 and H256. An ACP-binding region spans residues 257–261 (QANHR). N286 is a catalytic residue.

It belongs to the thiolase-like superfamily. FabH family. Homodimer.

It is found in the cytoplasm. It carries out the reaction malonyl-[ACP] + acetyl-CoA + H(+) = 3-oxobutanoyl-[ACP] + CO2 + CoA. The protein operates within lipid metabolism; fatty acid biosynthesis. Functionally, catalyzes the condensation reaction of fatty acid synthesis by the addition to an acyl acceptor of two carbons from malonyl-ACP. Catalyzes the first condensation reaction which initiates fatty acid synthesis and may therefore play a role in governing the total rate of fatty acid production. Possesses both acetoacetyl-ACP synthase and acetyl transacylase activities. Its substrate specificity determines the biosynthesis of branched-chain and/or straight-chain of fatty acids. The chain is Beta-ketoacyl-[acyl-carrier-protein] synthase III 3 from Streptomyces coelicolor (strain ATCC BAA-471 / A3(2) / M145).